A 424-amino-acid chain; its full sequence is Anaerobic glycerol-3-phosphate dehydrogenase subunit B (424 aa).

It belongs to the anaerobic G-3-P dehydrogenase subunit B family. As to quaternary structure, composed of a catalytic GlpA/B dimer and of membrane bound GlpC. FMN is required as a cofactor.

It carries out the reaction a quinone + sn-glycerol 3-phosphate = dihydroxyacetone phosphate + a quinol. It functions in the pathway polyol metabolism; glycerol degradation via glycerol kinase pathway; glycerone phosphate from sn-glycerol 3-phosphate (anaerobic route): step 1/1. Its function is as follows. Conversion of glycerol 3-phosphate to dihydroxyacetone. Uses fumarate or nitrate as electron acceptor. This is Anaerobic glycerol-3-phosphate dehydrogenase subunit B from Yersinia enterocolitica serotype O:8 / biotype 1B (strain NCTC 13174 / 8081).